Consider the following 505-residue polypeptide: Aspartyl/glutamyl-tRNA(Asn/Gln) amidotransferase subunit B (505 aa).

This sequence belongs to the GatB/GatE family. GatB subfamily. Heterotrimer of A, B and C subunits.

It catalyses the reaction L-glutamyl-tRNA(Gln) + L-glutamine + ATP + H2O = L-glutaminyl-tRNA(Gln) + L-glutamate + ADP + phosphate + H(+). The enzyme catalyses L-aspartyl-tRNA(Asn) + L-glutamine + ATP + H2O = L-asparaginyl-tRNA(Asn) + L-glutamate + ADP + phosphate + 2 H(+). Its function is as follows. Allows the formation of correctly charged Asn-tRNA(Asn) or Gln-tRNA(Gln) through the transamidation of misacylated Asp-tRNA(Asn) or Glu-tRNA(Gln) in organisms which lack either or both of asparaginyl-tRNA or glutaminyl-tRNA synthetases. The reaction takes place in the presence of glutamine and ATP through an activated phospho-Asp-tRNA(Asn) or phospho-Glu-tRNA(Gln). This Dinoroseobacter shibae (strain DSM 16493 / NCIMB 14021 / DFL 12) protein is Aspartyl/glutamyl-tRNA(Asn/Gln) amidotransferase subunit B.